Here is a 364-residue protein sequence, read N- to C-terminus: Long-wave-sensitive opsin 1 (364 aa).

Residues 1–52 (MAQRWGPQKLAGGQPQAGFEDSTQASIFTYTNNNATRDPFEGPNYHIAPRWV) lie on the Extracellular side of the membrane. The O-linked (GlcNAc) serine glycan is linked to Ser-22. N-linked (GlcNAc...) asparagine glycosylation is present at Asn-34. The helical transmembrane segment at 53 to 77 (YHVTSAWMIFVVIASVFTNGLVLAA) threads the bilayer. The Cytoplasmic segment spans residues 78–89 (TMRFKKLRHPLN). The chain crosses the membrane as a helical span at residues 90 to 115 (WILVNLAVADLAETIIASTISVVNQI). Residues 116 to 129 (YGYFVLGHPMCVVE) are Extracellular-facing. Residues Cys-126 and Cys-203 are joined by a disulfide bond. A helical membrane pass occupies residues 130 to 149 (GYTVSLCGITGLWSLAIISW). Residues 150–168 (ERWMVVCKPFGNVRFDAKL) lie on the Cytoplasmic side of the membrane. A helical membrane pass occupies residues 169–192 (AVAGIAFSWIWAAVWTAPPIFGWS). Residues 193-218 (RYWPHGLKTSCGPDVFSGSSYPGVQS) are Extracellular-facing. The chain crosses the membrane as a helical span at residues 219 to 246 (YMIVLMITCCIIPLSVIVLCYLQVWLAI). Residues 247–268 (RAVAKQQKESESTQKAEKEVTR) lie on the Cytoplasmic side of the membrane. A helical transmembrane segment spans residues 269-292 (MVMVMVFAFCLCWGPYTFFACFAA). The Extracellular portion of the chain corresponds to 293 to 300 (AHPGYAFH). A helical transmembrane segment spans residues 301–325 (PLVAALPAYFAKSATIYNPIIYVFM). Lys-312 is subject to N6-(retinylidene)lysine. Residues 326–364 (NRQFRNCILQLFGKKVDDSSELSSVSKTEASSVSSVSPA) are Cytoplasmic-facing.

The protein belongs to the G-protein coupled receptor 1 family. Opsin subfamily. Phosphorylated on some or all of the serine and threonine residues present in the C-terminal region. As to expression, the three color pigments are found in the cone photoreceptor cells. Expressed in retina.

Its subcellular location is the membrane. In terms of biological role, visual pigments are the light-absorbing molecules that mediate vision. They consist of an apoprotein, opsin, covalently linked to cis-retinal. This Equus caballus (Horse) protein is Long-wave-sensitive opsin 1 (OPN1LW).